The following is a 511-amino-acid chain: Histidine ammonia-lyase (511 aa).

A cross-link (5-imidazolinone (Ala-Gly)) is located at residues 142–144; sequence ASG. A 2,3-didehydroalanine (Ser) modification is found at serine 143.

It belongs to the PAL/histidase family. Contains an active site 4-methylidene-imidazol-5-one (MIO), which is formed autocatalytically by cyclization and dehydration of residues Ala-Ser-Gly.

The protein localises to the cytoplasm. It carries out the reaction L-histidine = trans-urocanate + NH4(+). The protein operates within amino-acid degradation; L-histidine degradation into L-glutamate; N-formimidoyl-L-glutamate from L-histidine: step 1/3. The sequence is that of Histidine ammonia-lyase from Brucella suis (strain ATCC 23445 / NCTC 10510).